The primary structure comprises 431 residues: Divalent metal cation transporter MntH (431 aa).

11 consecutive transmembrane segments (helical) span residues 33–53 (LLKF…PGNF), 61–81 (SSFN…AIFL), 110–130 (WIFW…EFIG), 141–161 (IPMI…VYME), 170–190 (TIIA…LFLA), 211–231 (AVLI…IYLH), 258–278 (ILIA…VSAA), 307–327 (GAFG…GTMA), 347–367 (IITM…MRVL), 368–388 (VLSQ…MLLI), and 406–426 (IVGF…LYLT).

Belongs to the NRAMP family.

The protein resides in the cell membrane. Its function is as follows. H(+)-stimulated, divalent metal cation uptake system. The polypeptide is Divalent metal cation transporter MntH (Clostridium acetobutylicum (strain ATCC 824 / DSM 792 / JCM 1419 / IAM 19013 / LMG 5710 / NBRC 13948 / NRRL B-527 / VKM B-1787 / 2291 / W)).